The chain runs to 244 residues: Phosphoadenosine 5'-phosphosulfate reductase (244 aa).

The active-site Nucleophile; cysteine thiosulfonate intermediate is Cys-239.

This sequence belongs to the PAPS reductase family. CysH subfamily.

It localises to the cytoplasm. It catalyses the reaction [thioredoxin]-disulfide + sulfite + adenosine 3',5'-bisphosphate + 2 H(+) = [thioredoxin]-dithiol + 3'-phosphoadenylyl sulfate. It functions in the pathway sulfur metabolism; hydrogen sulfide biosynthesis; sulfite from sulfate: step 3/3. Catalyzes the formation of sulfite from phosphoadenosine 5'-phosphosulfate (PAPS) using thioredoxin as an electron donor. The chain is Phosphoadenosine 5'-phosphosulfate reductase from Salmonella choleraesuis (strain SC-B67).